The primary structure comprises 1017 residues: Semaphorin-6D (1017 aa).

An N-terminal signal peptide occupies residues 1–20 (MRVFLLCAYILLLMISQLRA). The Extracellular segment spans residues 21–606 (VSFPEDDEPL…GESNQMVHMN (586 aa)). The Sema domain maps to 27-512 (DEPLNTVDYH…FSSCVIRIPL (486 aa)). N-linked (GlcNAc...) asparagine glycosylation is present at N51. Cystine bridges form between C108/C118, C136/C145, C259/C370, and C284/C329. N-linked (GlcNAc...) asparagine glycosylation is present at N283. N435 and N461 each carry an N-linked (GlcNAc...) asparagine glycan. Intrachain disulfides connect C477–C506, C515–C533, C521–C568, and C525–C541. A PSI domain is found at 514 to 569 (RCERYGSCKKSCIASRDPYCGWLSQGSCGRVTPGMLAEGYEQDAEFGNTAHLGDCH). The helical transmembrane segment at 607-627 (VLITCVFAAFVLGAFIAGVAV) threads the bilayer. The Cytoplasmic portion of the chain corresponds to 628–1017 (YCYRDMFVRK…SVRPLNKYTY (390 aa)). S667, S678, and S688 each carry phosphoserine. Disordered regions lie at residues 688–719 (SRKELPPNGDTKSMVMDHRGQPPELAALPTPE), 731–769 (AMKSHSEKAHGHGASRKETPQFFPSSPPPHSPLSHGHIP), 783–818 (TSFSNSNAHKAEKKLQNIDHPLTKSSSKRDHRRSVD), and 873–912 (LYSPPSTLPRNSPTKRVDVPTTPGVPMTSLGRQRGYHKNS). At T717 the chain carries Phosphothreonine. Positions 734 to 749 (SHSEKAHGHGASRKET) are enriched in basic and acidic residues. S875, S901, and S927 each carry phosphoserine. Residues 875–886 (SPPSTLPRNSPT) are compositionally biased toward polar residues. Residues 965-981 (LQPSLSRQSSYTSNGTL) show a composition bias toward polar residues. The segment at 965-1017 (LQPSLSRQSSYTSNGTLPRTGLKRTPSLKPDVPPKPSFVPQTPSVRPLNKYTY) is disordered.

The protein belongs to the semaphorin family.

It is found in the cell membrane. Shows growth cone collapsing activity on dorsal root ganglion (DRG) neurons in vitro. May be a stop signal for the DRG neurons in their target areas, and possibly also for other neurons. May also be involved in the maintenance and remodeling of neuronal connections. Ligand of TREM2 with PLXNA1 as coreceptor in dendritic cells, plays a role in the generation of immune responses and skeletal homeostasis. This chain is Semaphorin-6D (SEMA6D), found in Pongo abelii (Sumatran orangutan).